Consider the following 155-residue polypeptide: SsrA-binding protein (155 aa).

It belongs to the SmpB family.

It is found in the cytoplasm. Its function is as follows. Required for rescue of stalled ribosomes mediated by trans-translation. Binds to transfer-messenger RNA (tmRNA), required for stable association of tmRNA with ribosomes. tmRNA and SmpB together mimic tRNA shape, replacing the anticodon stem-loop with SmpB. tmRNA is encoded by the ssrA gene; the 2 termini fold to resemble tRNA(Ala) and it encodes a 'tag peptide', a short internal open reading frame. During trans-translation Ala-aminoacylated tmRNA acts like a tRNA, entering the A-site of stalled ribosomes, displacing the stalled mRNA. The ribosome then switches to translate the ORF on the tmRNA; the nascent peptide is terminated with the 'tag peptide' encoded by the tmRNA and targeted for degradation. The ribosome is freed to recommence translation, which seems to be the essential function of trans-translation. In Geobacillus sp. (strain WCH70), this protein is SsrA-binding protein.